Here is a 220-residue protein sequence, read N- to C-terminus: Casparian strip membrane protein 4 (220 aa).

Residues 1-39 are disordered; that stretch reads MDSRREVEESSTAPILESKRTRSNGKGKSIDGDHSPPHA. Residues 1 to 60 lie on the Cytoplasmic side of the membrane; it reads MDSRREVEESSTAPILESKRTRSNGKGKSIDGDHSPPHAATVVTTKATPLQKGGMKKGIA. Residues 61-81 form a helical membrane-spanning segment; the sequence is ILDFILRLGAIGAALGAAVIM. The Extracellular portion of the chain corresponds to 82–108; it reads GTNEQILPFFTQFLQFHAQWDDFPMFK. The chain crosses the membrane as a helical span at residues 109-129; that stretch reads FFVVANGAAAGFLILSLPFSI. Over 130 to 141 the chain is Cytoplasmic; the sequence is VCIVRPLAAGPR. Residues 142–162 form a helical membrane-spanning segment; that stretch reads FLLVIVDLVLMALVVAAASSA. The Extracellular portion of the chain corresponds to 163 to 194; that stretch reads AAVVYLAHNGSQDANWNAICQQFTDFCQGSSL. N171 carries N-linked (GlcNAc...) asparagine glycosylation. The chain crosses the membrane as a helical span at residues 195–215; it reads AVVASFVASVFLACLVVVSSV. Residues 216–220 are Cytoplasmic-facing; it reads ALKRT.

It belongs to the Casparian strip membrane proteins (CASP) family. Homodimer and heterodimers.

Its subcellular location is the cell membrane. Its function is as follows. Regulates membrane-cell wall junctions and localized cell wall deposition. Required for establishment of the Casparian strip membrane domain (CSD) and the subsequent formation of Casparian strips, a cell wall modification of the root endodermis that determines an apoplastic barrier between the intraorganismal apoplasm and the extraorganismal apoplasm and prevents lateral diffusion. In Medicago truncatula (Barrel medic), this protein is Casparian strip membrane protein 4.